The chain runs to 206 residues: Holliday junction branch migration complex subunit RuvA (206 aa).

The tract at residues methionine 1–asparagine 64 is domain I. Positions lysine 65–proline 143 are domain II. The flexible linker stretch occupies residues alanine 144–tyrosine 157. A domain III region spans residues serine 158–valine 206.

It belongs to the RuvA family. Homotetramer. Forms an RuvA(8)-RuvB(12)-Holliday junction (HJ) complex. HJ DNA is sandwiched between 2 RuvA tetramers; dsDNA enters through RuvA and exits via RuvB. An RuvB hexamer assembles on each DNA strand where it exits the tetramer. Each RuvB hexamer is contacted by two RuvA subunits (via domain III) on 2 adjacent RuvB subunits; this complex drives branch migration. In the full resolvosome a probable DNA-RuvA(4)-RuvB(12)-RuvC(2) complex forms which resolves the HJ.

It is found in the cytoplasm. In terms of biological role, the RuvA-RuvB-RuvC complex processes Holliday junction (HJ) DNA during genetic recombination and DNA repair, while the RuvA-RuvB complex plays an important role in the rescue of blocked DNA replication forks via replication fork reversal (RFR). RuvA specifically binds to HJ cruciform DNA, conferring on it an open structure. The RuvB hexamer acts as an ATP-dependent pump, pulling dsDNA into and through the RuvAB complex. HJ branch migration allows RuvC to scan DNA until it finds its consensus sequence, where it cleaves and resolves the cruciform DNA. This is Holliday junction branch migration complex subunit RuvA from Photobacterium profundum (strain SS9).